A 162-amino-acid chain; its full sequence is Interleukin-15 (162 aa).

A signal peptide spans 1 to 29 (MRISKPHLRITSIQCYVCLLLNTHFLTEA). A propeptide spanning residues 30–48 (GIRVFILGCISAGIPKTEA) is cleaved from the precursor. Intrachain disulfides connect Cys-83-Cys-133 and Cys-90-Cys-136. N-linked (GlcNAc...) asparagine glycosylation is found at Asn-119, Asn-127, and Asn-143.

Belongs to the IL-15/IL-21 family.

The protein localises to the secreted. In terms of biological role, cytokine that plays a major role in the development of inflammatory and protective immune responses to microbial invaders and parasites by modulating immune cells of both the innate and adaptive immune systems. Stimulates the proliferation of natural killer cells, T-cells and B-cells and promotes the secretion of several cytokines. In monocytes, induces the production of IL8 and monocyte chemotactic protein 1/CCL2, two chemokines that attract neutrophils and monocytes respectively to sites of infection. Unlike most cytokines, which are secreted in soluble form, IL15 is expressed in association with its high affinity IL15RA on the surface of IL15-producing cells and delivers signals to target cells that express IL2RB and IL2RG receptor subunits. Binding to its receptor triggers the phosphorylation of JAK1 and JAK3 and the recruitment and subsequent phosphorylation of signal transducer and activator of transcription-3/STAT3 and STAT5. In mast cells, induces the rapid tyrosine phosphorylation of STAT6 and thereby controls mast cell survival and release of cytokines such as IL4. The protein is Interleukin-15 (IL15) of Marmota monax (Woodchuck).